We begin with the raw amino-acid sequence, 90 residues long: Acylphosphatase (90 aa).

One can recognise an Acylphosphatase-like domain in the interval 3–89; sequence ALKIRVEGIV…EGYEDFTIKY (87 aa). Residues arginine 18 and asparagine 36 contribute to the active site.

This sequence belongs to the acylphosphatase family.

The enzyme catalyses an acyl phosphate + H2O = a carboxylate + phosphate + H(+). This Thermotoga maritima (strain ATCC 43589 / DSM 3109 / JCM 10099 / NBRC 100826 / MSB8) protein is Acylphosphatase (acyP).